Consider the following 429-residue polypeptide: Ribosomal RNA small subunit methyltransferase B (429 aa).

S-adenosyl-L-methionine is bound by residues 254-260 (CAAPGGK), Asp277, Asp303, and Asp322. The active-site Nucleophile is the Cys375.

It belongs to the class I-like SAM-binding methyltransferase superfamily. RsmB/NOP family.

It localises to the cytoplasm. The catalysed reaction is cytidine(967) in 16S rRNA + S-adenosyl-L-methionine = 5-methylcytidine(967) in 16S rRNA + S-adenosyl-L-homocysteine + H(+). Its function is as follows. Specifically methylates the cytosine at position 967 (m5C967) of 16S rRNA. In Photorhabdus laumondii subsp. laumondii (strain DSM 15139 / CIP 105565 / TT01) (Photorhabdus luminescens subsp. laumondii), this protein is Ribosomal RNA small subunit methyltransferase B.